Consider the following 209-residue polypeptide: Large ribosomal subunit protein uL3 (209 aa).

Positions 118 to 151 are disordered; sequence GFQGAIKRHGQSRGPMSHGSRYHRRPGSMGPVAP.

It belongs to the universal ribosomal protein uL3 family. As to quaternary structure, part of the 50S ribosomal subunit. Forms a cluster with proteins L14 and L19.

Its function is as follows. One of the primary rRNA binding proteins, it binds directly near the 3'-end of the 23S rRNA, where it nucleates assembly of the 50S subunit. In Enterococcus faecalis (strain ATCC 700802 / V583), this protein is Large ribosomal subunit protein uL3.